The primary structure comprises 121 residues: Large ribosomal subunit protein bL12 (121 aa).

The protein belongs to the bacterial ribosomal protein bL12 family. As to quaternary structure, homodimer. Part of the ribosomal stalk of the 50S ribosomal subunit. Forms a multimeric L10(L12)X complex, where L10 forms an elongated spine to which 2 to 4 L12 dimers bind in a sequential fashion. Binds GTP-bound translation factors.

In terms of biological role, forms part of the ribosomal stalk which helps the ribosome interact with GTP-bound translation factors. Is thus essential for accurate translation. This chain is Large ribosomal subunit protein bL12, found in Ureaplasma parvum serovar 3 (strain ATCC 27815 / 27 / NCTC 11736).